A 298-amino-acid chain; its full sequence is Pyridoxal 5'-phosphate synthase subunit PdxS (298 aa).

A D-ribose 5-phosphate-binding site is contributed by Asp24. The Schiff-base intermediate with D-ribose 5-phosphate role is filled by Lys81. Gly153 contributes to the D-ribose 5-phosphate binding site. Arg165 contributes to the D-glyceraldehyde 3-phosphate binding site. Residues Gly214 and 235–236 contribute to the D-ribose 5-phosphate site; that span reads GS.

It belongs to the PdxS/SNZ family. As to quaternary structure, in the presence of PdxT, forms a dodecamer of heterodimers.

The enzyme catalyses aldehydo-D-ribose 5-phosphate + D-glyceraldehyde 3-phosphate + L-glutamine = pyridoxal 5'-phosphate + L-glutamate + phosphate + 3 H2O + H(+). Its pathway is cofactor biosynthesis; pyridoxal 5'-phosphate biosynthesis. Functionally, catalyzes the formation of pyridoxal 5'-phosphate from ribose 5-phosphate (RBP), glyceraldehyde 3-phosphate (G3P) and ammonia. The ammonia is provided by the PdxT subunit. Can also use ribulose 5-phosphate and dihydroxyacetone phosphate as substrates, resulting from enzyme-catalyzed isomerization of RBP and G3P, respectively. This Halalkalibacterium halodurans (strain ATCC BAA-125 / DSM 18197 / FERM 7344 / JCM 9153 / C-125) (Bacillus halodurans) protein is Pyridoxal 5'-phosphate synthase subunit PdxS.